We begin with the raw amino-acid sequence, 779 residues long: Anion/proton exchange transporter GEF1 (779 aa).

Over 1 to 75 (MPTTYVPINQ…REVIWDRAKT (75 aa)) the chain is Cytoplasmic. A helical membrane pass occupies residues 76–96 (FITLSSTAIVIGCIAGFLQVF). The Lumenal segment spans residues 97-154 (TETLVNWKTGHCQRNWLLNKSFCCNGVVNEVTSTSNLLLKRQEFECEAQGLWIAWKGH). The helical transmembrane segment at 155 to 175 (VSPFIIFMLLSVLFALISTLL) threads the bilayer. The Cytoplasmic segment spans residues 176–177 (VK). The chain crosses the membrane as a helical span at residues 178-198 (YVAPMATGSGISEIKVWVSGF). The Lumenal segment spans residues 199–203 (EYNKE). A helical membrane pass occupies residues 204 to 224 (FLGFLTLVIKSVALPLAISSG). Residues 225 to 264 (LSVGKEGPSVHYATCCGYLLTKWLLRDTLTYSSQYEYITA) are Cytoplasmic-facing. The chain crosses the membrane as a helical span at residues 265-285 (ASGAGVAVAFGAPIGGVLFGL). Over 286–296 (EEIASANRFNS) the chain is Lumenal. A helical membrane pass occupies residues 297-319 (STLWKSYYVALVAITTLKYIDPF). Residues 320-336 (RNGRVILFNVTYDRDWK) are Cytoplasmic-facing. Residues 337–357 (VQEIPIFIALGIFGGLYGKYI) traverse the membrane as a helical segment. Residues 358–369 (SKWNINFIHFRK) are Lumenal-facing. Residues 370–390 (MYLSSWPVQEVLFLATLTALI) traverse the membrane as a helical segment. Topologically, residues 391-436 (SYFNEFLKLDMTESMGILFHECVKNDNTSTFSHRLCQLDENTHAFE) are cytoplasmic. The chain crosses the membrane as a helical span at residues 437–457 (FLKIFTSLCFATVIRALLVVV). The Lumenal segment spans residues 458–465 (SYGARVPA). The chain crosses the membrane as a helical span at residues 466 to 486 (GIFVPSMAVGATFGRAVSLLV). Residues 487-500 (ERFISGPSVITPGA) lie on the Cytoplasmic side of the membrane. The helical transmembrane segment at 501–523 (YAFLGAAATLSGITNLTLTVVVI) threads the bilayer. Residues 524 to 529 (MFELTG) lie on the Lumenal side of the membrane. The chain crosses the membrane as a helical span at residues 530 to 552 (AFMYIIPLMIVVAITRIILSTSG). Residues 553–779 (ISGGIADQMI…FTTNRNGNVI (227 aa)) lie on the Cytoplasmic side of the membrane. 2 CBS domains span residues 591-659 (MSSK…VNST) and 688-744 (MNES…YREV).

This sequence belongs to the chloride channel (TC 2.A.49) family. As to quaternary structure, homodimer. Interacts with GET3. Post-translationally, proteolytically processed in the secretory pathway by protease KEX2 within the first extracellular loop. However, both the N- and C-terminal products of the cleavage reaction are required for assembly of a functional channel.

The protein resides in the golgi apparatus membrane. The protein localises to the endosome membrane. Its subcellular location is the prevacuolar compartment membrane. Anion/proton exchange transporter involved in iron and copper cation homeostasis. Involved in intracellular iron metabolism during growth on fermentable and non fermentable carbon sources. Required for proper copper-loading and maturation of multicopper oxidase FET3. Important for adjusting intracellular compartment pH to more alkaline pH under iron limitation. May also transport chloride ions through the plasma membrane. The polypeptide is Anion/proton exchange transporter GEF1 (GEF1) (Saccharomyces cerevisiae (strain ATCC 204508 / S288c) (Baker's yeast)).